We begin with the raw amino-acid sequence, 157 residues long: Peptide methionine sulfoxide reductase MsrA (157 aa).

The active site involves Cys13.

This sequence belongs to the MsrA Met sulfoxide reductase family.

The catalysed reaction is L-methionyl-[protein] + [thioredoxin]-disulfide + H2O = L-methionyl-(S)-S-oxide-[protein] + [thioredoxin]-dithiol. It carries out the reaction [thioredoxin]-disulfide + L-methionine + H2O = L-methionine (S)-S-oxide + [thioredoxin]-dithiol. In terms of biological role, has an important function as a repair enzyme for proteins that have been inactivated by oxidation. Catalyzes the reversible oxidation-reduction of methionine sulfoxide in proteins to methionine. This Methanococcus maripaludis (strain C7 / ATCC BAA-1331) protein is Peptide methionine sulfoxide reductase MsrA.